The sequence spans 945 residues: MLPLSAALQTQAQNIVQRFQETQGADCALSSQELWVLASSDFVCDMLQSQPEWLATLRKQPPVADEWQHYAAWLQDDLEEVRDEAQLMRALRLFRRETLVRIAWAQALGQCSTQETLLQLSGLAETLIVSARDWLYQTCCREWGTPCNAQGVPQPLLILGMGKLGGGELNFSSDIDLIFAYPENGQTQGGRRELDNAQFFTRLGQRLIKALDQQTIDGFVYRVDMRLRPFGDSGPLVMSFAALEDYYQEQGRDWERYAMVKARLMGGSEDAYSEELRKTLRPFVFRRYIDFSVIQSLRNMKGMIAREVRRRGLKDNIKLGAGGIREIEFITQVFQLIRGGREPALQGRSLLPTLQAVGELGLLEPQQVQAMSASYLFLRRLENLLQAIADQQTQTLPQDELDQARLAWGMGFDDWSALLLALDHHMQAVRAVFNDLIGDDSPDVGEDPDYQHYHSLWQDALEENELAPLTPHLDEEARRQMLRTIAEFRHDVDKRTIGPRGRDVLDQLMPRLLAEVCPRQDAPTALLRLTQLLLSIVTRTTYLELLVEYHAALSHLIRLCAASPMVANQLSRYPLLLDELLEPATLYQPVAPDAYRSELRQYLLRVPEDDEEQRLEALRQFKQAQQLRIAAGDISGALPVMKVSDHLTYLAEAIIDTVVQQAWNDMVARYGQPTHLQEREGRGFAVIGYGKLGGWELGYSSDLDLVFILDCPPEVMTDGDRSIDGRQFYLRLAQRVMHLFSTRTSSGILYEVDARLRPSGAAGMLVSTVEAFADYQQSEAWTWEHQALVRARIVHGDPLLHQQFDVIRREILCKPRDLETLKREVREMREKMRNHLGNKQRELFDIKADEGGITDIEFIAQYLVLGYAAAEPRLTRWSDNVRIFELMANYDIMPEEEARALTQAYVTMRDEIHHLALQEHSGKIGNGQFAAEREQVRASWAKWLG.

Positions 1–441 (MLPLSAALQT…VFNDLIGDDS (441 aa)) are adenylyl removase. Positions 450-945 (YQHYHSLWQD…VRASWAKWLG (496 aa)) are adenylyl transferase.

Belongs to the GlnE family. Mg(2+) serves as cofactor.

It carries out the reaction [glutamine synthetase]-O(4)-(5'-adenylyl)-L-tyrosine + phosphate = [glutamine synthetase]-L-tyrosine + ADP. The catalysed reaction is [glutamine synthetase]-L-tyrosine + ATP = [glutamine synthetase]-O(4)-(5'-adenylyl)-L-tyrosine + diphosphate. Functionally, involved in the regulation of glutamine synthetase GlnA, a key enzyme in the process to assimilate ammonia. When cellular nitrogen levels are high, the C-terminal adenylyl transferase (AT) inactivates GlnA by covalent transfer of an adenylyl group from ATP to specific tyrosine residue of GlnA, thus reducing its activity. Conversely, when nitrogen levels are low, the N-terminal adenylyl removase (AR) activates GlnA by removing the adenylyl group by phosphorolysis, increasing its activity. The regulatory region of GlnE binds the signal transduction protein PII (GlnB) which indicates the nitrogen status of the cell. The chain is Bifunctional glutamine synthetase adenylyltransferase/adenylyl-removing enzyme from Serratia proteamaculans (strain 568).